Here is a 338-residue protein sequence, read N- to C-terminus: Glyceraldehyde-3-phosphate dehydrogenase (338 aa).

NAD(+) contacts are provided by residues 12 to 13, Asp-34, and Arg-79; that span reads RI. D-glyceraldehyde 3-phosphate contacts are provided by residues 150-152, Thr-181, 210-211, and Arg-233; these read SCT and TG. Residue Cys-151 is the Nucleophile of the active site. An NAD(+)-binding site is contributed by Asn-315.

The protein belongs to the glyceraldehyde-3-phosphate dehydrogenase family. Homotetramer.

It is found in the cytoplasm. The enzyme catalyses D-glyceraldehyde 3-phosphate + phosphate + NAD(+) = (2R)-3-phospho-glyceroyl phosphate + NADH + H(+). It functions in the pathway carbohydrate degradation; glycolysis; pyruvate from D-glyceraldehyde 3-phosphate: step 1/5. The sequence is that of Glyceraldehyde-3-phosphate dehydrogenase (gpd1) from Hypocrea atroviridis (Trichoderma atroviride).